An 87-amino-acid chain; its full sequence is MADRNQRKVYTGRVVSDKMDKTITVVVETYKKHGLYGKRVKYSKKFKAHDENNIAKTGDVVRISETRPLSATKHFRLLEVVEEAVII.

Belongs to the universal ribosomal protein uS17 family. As to quaternary structure, part of the 30S ribosomal subunit.

Functionally, one of the primary rRNA binding proteins, it binds specifically to the 5'-end of 16S ribosomal RNA. The polypeptide is Small ribosomal subunit protein uS17 (Listeria innocua serovar 6a (strain ATCC BAA-680 / CLIP 11262)).